The following is a 562-amino-acid chain: Undecaprenyl phosphate-alpha-4-amino-4-deoxy-L-arabinose arabinosyl transferase (562 aa).

The next 12 helical transmembrane spans lie at 14 to 34, 91 to 111, 120 to 140, 142 to 162, 186 to 206, 215 to 235, 267 to 287, 302 to 322, 324 to 344, 354 to 374, 395 to 415, and 425 to 445; these read IKFS…PLNY, FSVR…IYLF, ILSL…IIGT, SVLD…FWLA, FITK…IWLF, TIIH…PWIY, PFWY…GFLF, IEFY…ISKG, LPTY…KNIE, LLKI…IFII, LILC…IIFN, and LSII…IIYA.

It belongs to the glycosyltransferase 83 family.

It is found in the cell inner membrane. The catalysed reaction is 4-amino-4-deoxy-alpha-L-arabinopyranosyl di-trans,octa-cis-undecaprenyl phosphate + lipid IVA = lipid IIA + di-trans,octa-cis-undecaprenyl phosphate.. It functions in the pathway lipopolysaccharide metabolism; 4-amino-4-deoxy-beta-L-arabinose-lipid A biosynthesis. Functionally, catalyzes the transfer of the L-Ara4N moiety of the glycolipid undecaprenyl phosphate-alpha-L-Ara4N to lipid A. The modified arabinose is attached to lipid A and is required for resistance to polymyxin and cationic antimicrobial peptides. The polypeptide is Undecaprenyl phosphate-alpha-4-amino-4-deoxy-L-arabinose arabinosyl transferase (Wigglesworthia glossinidia brevipalpis).